Consider the following 310-residue polypeptide: U-megalopygitoxin(8)-Mo15 (310 aa).

An N-terminal signal peptide occupies residues 1–27 (MARFSSKNLTKLFQYLVLSLLSPVAFG).

It belongs to the megalysin family. In terms of processing, contains 3 disulfide bonds. Expressed by the venom apparatus.

Its subcellular location is the secreted. The protein resides in the target cell membrane. Functionally, may function as a large pore-forming protein. This Megalopyge opercularis (Southern flannel moth) protein is U-megalopygitoxin(8)-Mo15.